The following is a 122-amino-acid chain: Large ribosomal subunit protein uL14 (122 aa).

This sequence belongs to the universal ribosomal protein uL14 family. Part of the 50S ribosomal subunit. Forms a cluster with proteins L3 and L19. In the 70S ribosome, L14 and L19 interact and together make contacts with the 16S rRNA in bridges B5 and B8.

Binds to 23S rRNA. Forms part of two intersubunit bridges in the 70S ribosome. This is Large ribosomal subunit protein uL14 from Janthinobacterium sp. (strain Marseille) (Minibacterium massiliensis).